A 166-amino-acid polypeptide reads, in one-letter code: Large ribosomal subunit protein eL14 (166 aa).

The segment at 135 to 166 is disordered; the sequence is KADGTPRVLKKDRRERLRAEKAKGGKKAAAKK. Residues 146–157 show a composition bias toward basic and acidic residues; sequence DRRERLRAEKAK.

This sequence belongs to the eukaryotic ribosomal protein eL14 family.

This is Large ribosomal subunit protein eL14 (RpL14) from Drosophila melanogaster (Fruit fly).